A 624-amino-acid chain; its full sequence is Chaperone protein HtpG (624 aa).

Residues 1-336 (MSMKGQETRG…SNDLPLNVSR (336 aa)) form an a; substrate-binding region. Positions 337–552 (EILQDSRVTQ…ADEMSTQMAK (216 aa)) are b. The c stretch occupies residues 553 to 624 (LFAAAGQQAP…IRRMNQLLTA (72 aa)).

Belongs to the heat shock protein 90 family. Homodimer.

It localises to the cytoplasm. In terms of biological role, molecular chaperone. Has ATPase activity. The polypeptide is Chaperone protein HtpG (Yersinia enterocolitica serotype O:8 / biotype 1B (strain NCTC 13174 / 8081)).